Reading from the N-terminus, the 592-residue chain is E3 ubiquitin-protein ligase RNF180 (592 aa).

Residues 1-564 lie on the Cytoplasmic side of the membrane; that stretch reads MKRSEESTST…DSRGWWFDMD (564 aa). A Phosphoserine modification is found at serine 231. The segment at 282 to 489 is interaction with ZIC2; it reads QSPPSFDPNM…VFLQTELNNA (208 aa). The RING-type zinc finger occupies 432–474; it reads CAVCLDVYFNPYMCYPCHHIFCEPCLRTLAKDNPASTPCPLCR. A helical membrane pass occupies residues 565 to 585; the sequence is MVIIYIYSVNWVIGFVVFCFL. Topologically, residues 586-592 are extracellular; that stretch reads CYFFFPF.

In terms of assembly, interacts with ZIC2. Brain, kidney, testis and uterus. membrane protein. Nucleus envelope.

It localises to the endoplasmic reticulum membrane. It is found in the nucleus envelope. The catalysed reaction is S-ubiquitinyl-[E2 ubiquitin-conjugating enzyme]-L-cysteine + [acceptor protein]-L-lysine = [E2 ubiquitin-conjugating enzyme]-L-cysteine + N(6)-ubiquitinyl-[acceptor protein]-L-lysine.. The protein operates within protein modification; protein ubiquitination. Its function is as follows. E3 ubiquitin-protein ligase which promotes polyubiquitination and degradation by the proteasome pathway of ZIC2. The chain is E3 ubiquitin-protein ligase RNF180 (Rnf180) from Mus musculus (Mouse).